The following is a 349-amino-acid chain: Glycerol-1-phosphate dehydrogenase [NAD(P)+] (349 aa).

NAD(+) contacts are provided by residues 95–99 and 117–120; these read GKSID and TSPS. Aspartate 122 is a substrate binding site. Serine 126 contacts NAD(+). Aspartate 169 lines the substrate pocket. Residues aspartate 169 and histidine 249 each contribute to the Zn(2+) site. Histidine 253 is a substrate binding site. Histidine 265 is a binding site for Zn(2+).

Belongs to the glycerol-1-phosphate dehydrogenase family. Homodimer. Zn(2+) is required as a cofactor.

It localises to the cytoplasm. The enzyme catalyses sn-glycerol 1-phosphate + NAD(+) = dihydroxyacetone phosphate + NADH + H(+). It carries out the reaction sn-glycerol 1-phosphate + NADP(+) = dihydroxyacetone phosphate + NADPH + H(+). It functions in the pathway membrane lipid metabolism; glycerophospholipid metabolism. Its function is as follows. Catalyzes the NAD(P)H-dependent reduction of dihydroxyacetonephosphate (DHAP or glycerone phosphate) to glycerol 1-phosphate (G1P). The G1P thus generated is used as the glycerophosphate backbone of phospholipids in the cellular membranes of Archaea. The sequence is that of Glycerol-1-phosphate dehydrogenase [NAD(P)+] from Hyperthermus butylicus (strain DSM 5456 / JCM 9403 / PLM1-5).